Consider the following 348-residue polypeptide: tRNA N6-adenosine threonylcarbamoyltransferase (348 aa).

Positions 120 and 124 each coordinate Fe cation. Residues 143-147, Asp176, Gly189, and Asn282 each bind substrate; that span reads LVSGG. Asp310 provides a ligand contact to Fe cation.

The protein belongs to the KAE1 / TsaD family. It depends on Fe(2+) as a cofactor.

The protein resides in the cytoplasm. It catalyses the reaction L-threonylcarbamoyladenylate + adenosine(37) in tRNA = N(6)-L-threonylcarbamoyladenosine(37) in tRNA + AMP + H(+). Functionally, required for the formation of a threonylcarbamoyl group on adenosine at position 37 (t(6)A37) in tRNAs that read codons beginning with adenine. Is involved in the transfer of the threonylcarbamoyl moiety of threonylcarbamoyl-AMP (TC-AMP) to the N6 group of A37, together with TsaE and TsaB. TsaD likely plays a direct catalytic role in this reaction. The protein is tRNA N6-adenosine threonylcarbamoyltransferase of Paracidovorax citrulli (strain AAC00-1) (Acidovorax citrulli).